A 363-amino-acid chain; its full sequence is 3-dehydroquinate synthase (363 aa).

NAD(+)-binding positions include D75–K80, G109–D113, T133–S134, K146, K155, and T173–T176. The Zn(2+) site is built by E188, H251, and H267.

Belongs to the sugar phosphate cyclases superfamily. Dehydroquinate synthase family. Requires Co(2+) as cofactor. Zn(2+) is required as a cofactor. NAD(+) serves as cofactor.

The protein resides in the cytoplasm. It catalyses the reaction 7-phospho-2-dehydro-3-deoxy-D-arabino-heptonate = 3-dehydroquinate + phosphate. It functions in the pathway metabolic intermediate biosynthesis; chorismate biosynthesis; chorismate from D-erythrose 4-phosphate and phosphoenolpyruvate: step 2/7. Catalyzes the conversion of 3-deoxy-D-arabino-heptulosonate 7-phosphate (DAHP) to dehydroquinate (DHQ). This chain is 3-dehydroquinate synthase, found in Arthrobacter sp. (strain FB24).